The primary structure comprises 414 residues: MEQPIPVTRQSFDEWIVPTYAPADFIVVRGEGATLWDQQGKSYIDFAGGIAVNALGHGHPAVKAALIEQADKVWHLGNGYTNEPVLRLAKQLIDATFAEKVFFCNSGAEANEAALKLARKYALDNFANKPGQQGEKNQIVAFRNAFHGRTLFTVSAGGQPKYSQDFAPLPGGISHGIFNDLASAEALITDQTCAVIVEPIQGEGGVLPADSEFLHGLRALCDRHNAVLIFDEVQTGVGRTGELYAYMHYGVTPDVLTSAKALGGGFPIAAMLTTTKYASALNVGSHGTTYGGNPLACAVAGTVLSLINTPAVLSGVKERHQWFLEGLADINARYKVFAEIRGRGLLIGCVLNSDYAGKSKDIIQAAAQHGIIALIAGPDVVRFAPSLIISQHDIKEGLARLAMGIEQVCRKAKS.

An N6-(pyridoxal phosphate)lysine modification is found at Lys-260.

Belongs to the class-III pyridoxal-phosphate-dependent aminotransferase family. AstC subfamily. Requires pyridoxal 5'-phosphate as cofactor.

It carries out the reaction N(2)-succinyl-L-ornithine + 2-oxoglutarate = N-succinyl-L-glutamate 5-semialdehyde + L-glutamate. The protein operates within amino-acid degradation; L-arginine degradation via AST pathway; L-glutamate and succinate from L-arginine: step 3/5. Catalyzes the transamination of N(2)-succinylornithine and alpha-ketoglutarate into N(2)-succinylglutamate semialdehyde and glutamate. Can also act as an acetylornithine aminotransferase. The polypeptide is Succinylornithine transaminase (Yersinia enterocolitica serotype O:8 / biotype 1B (strain NCTC 13174 / 8081)).